A 448-amino-acid polypeptide reads, in one-letter code: Chaperone SurA (448 aa).

The N-terminal stretch at 1–27 (MKKTLRFAAVASGLVASLITVAPSASA) is a signal peptide. PpiC domains lie at 185 to 288 (QQDL…RLVE) and 301 to 399 (IVQT…QVLG).

The protein localises to the periplasm. The enzyme catalyses [protein]-peptidylproline (omega=180) = [protein]-peptidylproline (omega=0). Chaperone involved in the correct folding and assembly of outer membrane proteins. Recognizes specific patterns of aromatic residues and the orientation of their side chains, which are found more frequently in integral outer membrane proteins. May act in both early periplasmic and late outer membrane-associated steps of protein maturation. The chain is Chaperone SurA from Burkholderia pseudomallei (strain 1710b).